A 143-amino-acid chain; its full sequence is Small ribosomal subunit protein uS12 (143 aa).

A Hydroxyproline modification is found at proline 62.

The protein belongs to the universal ribosomal protein uS12 family.

The protein is Small ribosomal subunit protein uS12 (rps23) of Dictyostelium discoideum (Social amoeba).